Here is a 222-residue protein sequence, read N- to C-terminus: Probable elongation factor 1-beta (222 aa).

The interval 90-111 is disordered; that stretch reads KPAADDDDDVDLFGSDDEEDEE. Residues 94 to 111 are compositionally biased toward acidic residues; that stretch reads DDDDDVDLFGSDDEEDEE. A Phosphoserine modification is found at Ser-104.

Belongs to the EF-1-beta/EF-1-delta family. In terms of assembly, EF-1 is composed of 4 subunits: alpha, beta, beta' and gamma. In terms of processing, phosphorylation affects the GDP/GTP exchange rate.

In terms of biological role, EF-1-beta and EF-1-delta stimulate the exchange of GDP bound to EF-1-alpha to GTP. This chain is Probable elongation factor 1-beta, found in Drosophila melanogaster (Fruit fly).